The chain runs to 226 residues: MTDRKRGFFGWTWFVMWRFLLLLALLLLVLRFVPPPTTSFMLQSDYPVSQHWVSIDELPAHMPLAVVAAEDQLFPEHFGVDINSITKALNQYDDGEGLRGASTITQQTAKNLLLWPGRNFVRKGLEAMLAVSLEAIWGKKRILEVYLNVAEFGKGIYGVEAASQHYFNKSARYLSNNEAARLAVLLPSPRNRNPNNLTPYLRQRVAWGEKQMRQLGSGYLKPILTN.

The chain crosses the membrane as a helical span at residues 8-28 (FFGWTWFVMWRFLLLLALLLL).

The protein belongs to the glycosyltransferase 51 family.

It localises to the cell inner membrane. The enzyme catalyses [GlcNAc-(1-&gt;4)-Mur2Ac(oyl-L-Ala-gamma-D-Glu-L-Lys-D-Ala-D-Ala)](n)-di-trans,octa-cis-undecaprenyl diphosphate + beta-D-GlcNAc-(1-&gt;4)-Mur2Ac(oyl-L-Ala-gamma-D-Glu-L-Lys-D-Ala-D-Ala)-di-trans,octa-cis-undecaprenyl diphosphate = [GlcNAc-(1-&gt;4)-Mur2Ac(oyl-L-Ala-gamma-D-Glu-L-Lys-D-Ala-D-Ala)](n+1)-di-trans,octa-cis-undecaprenyl diphosphate + di-trans,octa-cis-undecaprenyl diphosphate + H(+). Its pathway is cell wall biogenesis; peptidoglycan biosynthesis. Its function is as follows. Peptidoglycan polymerase that catalyzes glycan chain elongation from lipid-linked precursors. This is Biosynthetic peptidoglycan transglycosylase from Shewanella frigidimarina (strain NCIMB 400).